The following is a 195-amino-acid chain: Glycerol-3-phosphate acyltransferase (195 aa).

Transmembrane regions (helical) follow at residues 2–22 (INLLVIISAYFIGNFSTSFIV), 79–99 (AALMAGIAVVIGHNWPVLLGF), 111–131 (VALIASPLAAIASISLGVVIL), and 146–166 (TILPFFLFSYGLEYFIFGLVL).

The protein belongs to the PlsY family. Probably interacts with PlsX.

Its subcellular location is the cell membrane. It catalyses the reaction an acyl phosphate + sn-glycerol 3-phosphate = a 1-acyl-sn-glycero-3-phosphate + phosphate. Its pathway is lipid metabolism; phospholipid metabolism. Functionally, catalyzes the transfer of an acyl group from acyl-phosphate (acyl-PO(4)) to glycerol-3-phosphate (G3P) to form lysophosphatidic acid (LPA). This enzyme utilizes acyl-phosphate as fatty acyl donor, but not acyl-CoA or acyl-ACP. The sequence is that of Glycerol-3-phosphate acyltransferase from Alkaliphilus metalliredigens (strain QYMF).